The chain runs to 165 residues: uncharacterized protein (165 aa).

The helical transmembrane segment at 16-36 (ASISSILNFFFFYIMEYFVAV) threads the bilayer.

This sequence belongs to the asfivirus F165R family.

Its subcellular location is the host membrane. This is an uncharacterized protein from African swine fever virus (isolate Tick/Malawi/Lil 20-1/1983) (ASFV).